We begin with the raw amino-acid sequence, 615 residues long: DNA mismatch repair protein MutL (615 aa).

The tract at residues Phe-363–Tyr-397 is disordered. A compositionally biased stretch (low complexity) spans Ala-364 to Pro-391.

Belongs to the DNA mismatch repair MutL/HexB family.

This protein is involved in the repair of mismatches in DNA. It is required for dam-dependent methyl-directed DNA mismatch repair. May act as a 'molecular matchmaker', a protein that promotes the formation of a stable complex between two or more DNA-binding proteins in an ATP-dependent manner without itself being part of a final effector complex. In Shigella boydii serotype 18 (strain CDC 3083-94 / BS512), this protein is DNA mismatch repair protein MutL.